A 143-amino-acid chain; its full sequence is Transcription antitermination protein NusB (143 aa).

Belongs to the NusB family.

Its function is as follows. Involved in transcription antitermination. Required for transcription of ribosomal RNA (rRNA) genes. Binds specifically to the boxA antiterminator sequence of the ribosomal RNA (rrn) operons. The chain is Transcription antitermination protein NusB from Desulforapulum autotrophicum (strain ATCC 43914 / DSM 3382 / VKM B-1955 / HRM2) (Desulfobacterium autotrophicum).